The following is a 249-amino-acid chain: uncharacterized protein (249 aa).

An S4 RNA-binding domain is found at 7-64 (PRVHVFLAEKGVGSRRFCEELIRKKLVRVNNTIAKLGDKVTLGDRIIYKKQIFVFKDF). Asp-112 (nucleophile) is an active-site residue.

The protein belongs to the pseudouridine synthase RsuA family.

It carries out the reaction a uridine in RNA = a pseudouridine in RNA. This is an uncharacterized protein from Borreliella burgdorferi (strain ATCC 35210 / DSM 4680 / CIP 102532 / B31) (Borrelia burgdorferi).